Here is a 199-residue protein sequence, read N- to C-terminus: dITP/XTP pyrophosphatase (199 aa).

A substrate-binding site is contributed by 9–14 (TGNKGK). Glu-41 and Asp-70 together coordinate Mg(2+). Residue Asp-70 is the Proton acceptor of the active site. Substrate contacts are provided by residues Ser-71, 157 to 160 (FGYD), Lys-180, and 185 to 186 (HR).

This sequence belongs to the HAM1 NTPase family. In terms of assembly, homodimer. It depends on Mg(2+) as a cofactor.

The enzyme catalyses XTP + H2O = XMP + diphosphate + H(+). It carries out the reaction dITP + H2O = dIMP + diphosphate + H(+). It catalyses the reaction ITP + H2O = IMP + diphosphate + H(+). Its function is as follows. Pyrophosphatase that catalyzes the hydrolysis of nucleoside triphosphates to their monophosphate derivatives, with a high preference for the non-canonical purine nucleotides XTP (xanthosine triphosphate), dITP (deoxyinosine triphosphate) and ITP. Seems to function as a house-cleaning enzyme that removes non-canonical purine nucleotides from the nucleotide pool, thus preventing their incorporation into DNA/RNA and avoiding chromosomal lesions. The polypeptide is dITP/XTP pyrophosphatase (Mannheimia succiniciproducens (strain KCTC 0769BP / MBEL55E)).